Here is a 196-residue protein sequence, read N- to C-terminus: FAD-linked sulfhydryl oxidase ERV2 (196 aa).

Residues 1-12 (MKQIVKRSHAIR) lie on the Cytoplasmic side of the membrane. Residues 13-35 (IVAALGIIGLWMFFSSNELSIAT) form a helical; Signal-anchor membrane-spanning segment. Over 36–196 (PGLIKAKSGI…SLEKEAKQHG (161 aa)) the chain is Lumenal. Residues 72–174 (MGDDKVKKEV…YDCATILEDY (103 aa)) form the ERV/ALR sulfhydryl oxidase domain. Positions 78, 83, and 86 each coordinate FAD. The cysteines at positions 121 and 124 are disulfide-linked. Residues H127, C150, H153, N157, K162, and Y174 each coordinate FAD. C150 and C167 are oxidised to a cystine. C176 and C178 form a disulfide bridge.

Homodimer. Interacts with the substrate protein PDI1, forming transient intermolecular disulfide bridges. It depends on FAD as a cofactor.

The protein resides in the endoplasmic reticulum membrane. It catalyses the reaction 2 R'C(R)SH + O2 = R'C(R)S-S(R)CR' + H2O2. Its function is as follows. FAD-dependent sulfhydryl oxidase that catalyzes disulfide bond formation in the endoplasmic reticulum lumen in parallel to ERO1. The protein is FAD-linked sulfhydryl oxidase ERV2 (ERV2) of Saccharomyces cerevisiae (strain ATCC 204508 / S288c) (Baker's yeast).